We begin with the raw amino-acid sequence, 216 residues long: Soluble inorganic pyrophosphatase 4 (216 aa).

Ser-18 bears the Phosphoserine mark. Substrate contacts are provided by Lys-66 and Arg-80. The active-site Proton donor is the Tyr-88. Tyr-92 contributes to the substrate binding site. Asp-102, Asp-107, and Asp-139 together coordinate Mg(2+). Tyr-176 provides a ligand contact to substrate.

It belongs to the PPase family. Monomer. It depends on Mg(2+) as a cofactor. As to expression, ubiquitous, excepted in pollen. Very low expression in cork, xylem and hypocotyls.

Its subcellular location is the cytoplasm. The enzyme catalyses diphosphate + H2O = 2 phosphate + H(+). Its activity is regulated as follows. Inhibited by Zn(2+), Ca(2+), Ba(2+), Fe(2+), Co(2+), Cu(2+), Eu(2+), Eu(3+) and Mn(2+). In terms of biological role, catalyzes the irreversible hydrolysis of pyrophosphate (PPi) to phosphate. The MgPPi(2-) complex binds to the enzyme only after a free Mg(2+) ion has bound. No activity with glycerol-3-phosphate, glucose-6-phosphate, p-nitrophenylphosphate, ADP, NADP(+), NAD(+),NADH, NADPH or phosphoribosyl pyrophosphate as substrates. This chain is Soluble inorganic pyrophosphatase 4, found in Arabidopsis thaliana (Mouse-ear cress).